Reading from the N-terminus, the 687-residue chain is T-box transcription factor TBX2b (687 aa).

A DNA-binding region (T-box) is located at residues leucine 103–aspartate 276. Disordered regions lie at residues aspartate 303–serine 452 and asparagine 611–lysine 687. Composition is skewed to basic and acidic residues over residues glycine 338–aspartate 357, serine 375–serine 400, and asparagine 408–glutamate 430. 3 stretches are compositionally biased toward polar residues: residues asparagine 431 to proline 451, asparagine 611 to cysteine 630, and glycine 644 to threonine 654. A coiled-coil region spans residues threonine 654–serine 681. Basic and acidic residues predominate over residues serine 675–lysine 687.

As to quaternary structure, binds DNA as a monomer. As to expression, expressed in the axial mesoderm, notably, in the notochordal precursor cells immediately before formation of the notochord and in the chordoneural hinge of the tail bud, after the notochord is formed. In addition, its expression is detected in the ventral forebrain, sensory neurons, fin buds and excretory system.

The protein localises to the nucleus. In terms of biological role, transcription factor which acts as a transcriptional repressor. May also function as a transcriptional activator. Binds to the palindromic T site 5'-TTCACACCTAGGTGTGAA-3' DNA sequence, or a half-site, which are present in the regulatory region of several genes. Involved in the transcriptional regulation of genes required for mesoderm differentiation. Plays a role in the specification of late notochordal precursor cells and formation of the differentiated notochord. Required for cardiac atrioventricular canal formation. In Danio rerio (Zebrafish), this protein is T-box transcription factor TBX2b (tbx2b).